The sequence spans 279 residues: Acetylglutamate kinase (279 aa).

Residues 64-65 (GG), Arg-86, and Asn-177 each bind substrate.

This sequence belongs to the acetylglutamate kinase family. ArgB subfamily.

The protein localises to the cytoplasm. It carries out the reaction N-acetyl-L-glutamate + ATP = N-acetyl-L-glutamyl 5-phosphate + ADP. Its pathway is amino-acid biosynthesis; L-arginine biosynthesis; N(2)-acetyl-L-ornithine from L-glutamate: step 2/4. Its function is as follows. Catalyzes the ATP-dependent phosphorylation of N-acetyl-L-glutamate. This is Acetylglutamate kinase from Campylobacter jejuni subsp. jejuni serotype O:23/36 (strain 81-176).